The following is a 118-amino-acid chain: Basic phospholipase A2 2 (118 aa).

7 disulfide bridges follow: Cys-11-Cys-71, Cys-27-Cys-117, Cys-29-Cys-45, Cys-44-Cys-98, Cys-51-Cys-91, Cys-60-Cys-84, and Cys-78-Cys-89. The Ca(2+) site is built by Tyr-28, Gly-30, and Gly-32. The active site involves His-48. Asp-49 contributes to the Ca(2+) binding site. Asp-92 is a catalytic residue.

This sequence belongs to the phospholipase A2 family. Group I subfamily. D49 sub-subfamily. It depends on Ca(2+) as a cofactor. Expressed by the venom gland.

It is found in the secreted. The catalysed reaction is a 1,2-diacyl-sn-glycero-3-phosphocholine + H2O = a 1-acyl-sn-glycero-3-phosphocholine + a fatty acid + H(+). In terms of biological role, snake venom phospholipase A2 (PLA2) that inhibits neuromuscular transmission by blocking acetylcholine release from the nerve termini. PLA2 catalyzes the calcium-dependent hydrolysis of the 2-acyl groups in 3-sn-phosphoglycerides. The polypeptide is Basic phospholipase A2 2 (Laticauda colubrina (Yellow-lipped sea krait)).